The following is a 69-amino-acid chain: Ribosome modulation factor (69 aa).

This sequence belongs to the ribosome modulation factor family.

Its subcellular location is the cytoplasm. During stationary phase, converts 70S ribosomes to an inactive dimeric form (100S ribosomes). This Hahella chejuensis (strain KCTC 2396) protein is Ribosome modulation factor.